We begin with the raw amino-acid sequence, 372 residues long: Queuine tRNA-ribosyltransferase (372 aa).

The active-site Proton acceptor is Asp-92. Residues 92-96, Asp-146, Gln-188, and Gly-215 each bind substrate; that span reads DSGGY. Residues 246-252 form an RNA binding region; it reads GIGTIRE. Asp-265 functions as the Nucleophile in the catalytic mechanism. Positions 270–274 are RNA binding; important for wobble base 34 recognition; sequence TRLGR. The Zn(2+) site is built by Cys-303, Cys-305, Cys-308, and His-334.

Belongs to the queuine tRNA-ribosyltransferase family. Homodimer. Within each dimer, one monomer is responsible for RNA recognition and catalysis, while the other monomer binds to the replacement base PreQ1. Zn(2+) serves as cofactor.

It catalyses the reaction 7-aminomethyl-7-carbaguanine + guanosine(34) in tRNA = 7-aminomethyl-7-carbaguanosine(34) in tRNA + guanine. It functions in the pathway tRNA modification; tRNA-queuosine biosynthesis. Its function is as follows. Catalyzes the base-exchange of a guanine (G) residue with the queuine precursor 7-aminomethyl-7-deazaguanine (PreQ1) at position 34 (anticodon wobble position) in tRNAs with GU(N) anticodons (tRNA-Asp, -Asn, -His and -Tyr). Catalysis occurs through a double-displacement mechanism. The nucleophile active site attacks the C1' of nucleotide 34 to detach the guanine base from the RNA, forming a covalent enzyme-RNA intermediate. The proton acceptor active site deprotonates the incoming PreQ1, allowing a nucleophilic attack on the C1' of the ribose to form the product. After dissociation, two additional enzymatic reactions on the tRNA convert PreQ1 to queuine (Q), resulting in the hypermodified nucleoside queuosine (7-(((4,5-cis-dihydroxy-2-cyclopenten-1-yl)amino)methyl)-7-deazaguanosine). This Prochlorococcus marinus (strain SARG / CCMP1375 / SS120) protein is Queuine tRNA-ribosyltransferase.